Consider the following 299-residue polypeptide: Protein LacX, chromosomal (299 aa).

This chain is Protein LacX, chromosomal (lacX), found in Lactococcus lactis subsp. lactis (Streptococcus lactis).